A 259-amino-acid polypeptide reads, in one-letter code: Hydroxyacylglutathione hydrolase (259 aa).

Positions 56, 58, 60, 61, 112, 133, and 171 each coordinate Zn(2+).

It belongs to the metallo-beta-lactamase superfamily. Glyoxalase II family. As to quaternary structure, monomer. Zn(2+) is required as a cofactor.

It catalyses the reaction an S-(2-hydroxyacyl)glutathione + H2O = a 2-hydroxy carboxylate + glutathione + H(+). It functions in the pathway secondary metabolite metabolism; methylglyoxal degradation; (R)-lactate from methylglyoxal: step 2/2. Its function is as follows. Thiolesterase that catalyzes the hydrolysis of S-D-lactoyl-glutathione to form glutathione and D-lactic acid. This chain is Hydroxyacylglutathione hydrolase, found in Pseudomonas putida (strain GB-1).